Consider the following 590-residue polypeptide: Aspartate--tRNA(Asp/Asn) ligase (590 aa).

L-aspartate is bound at residue Glu175. Positions 199–202 (QQYK) are aspartate. Arg221 and His450 together coordinate L-aspartate. 221-223 (RDE) contacts ATP. Glu484 serves as a coordination point for ATP. Arg491 is a binding site for L-aspartate. Position 536-539 (536-539 (GVDR)) interacts with ATP.

It belongs to the class-II aminoacyl-tRNA synthetase family. Type 1 subfamily. In terms of assembly, homodimer.

It localises to the cytoplasm. The catalysed reaction is tRNA(Asx) + L-aspartate + ATP = L-aspartyl-tRNA(Asx) + AMP + diphosphate. In terms of biological role, aspartyl-tRNA synthetase with relaxed tRNA specificity since it is able to aspartylate not only its cognate tRNA(Asp) but also tRNA(Asn). Reaction proceeds in two steps: L-aspartate is first activated by ATP to form Asp-AMP and then transferred to the acceptor end of tRNA(Asp/Asn). The chain is Aspartate--tRNA(Asp/Asn) ligase from Nitrobacter hamburgensis (strain DSM 10229 / NCIMB 13809 / X14).